Here is a 327-residue protein sequence, read N- to C-terminus: GTPase Obg (327 aa).

The 159-residue stretch at 1–159 (MQFIDQANII…WEVQLELKLL (159 aa)) folds into the Obg domain. Positions 160 to 327 (AEVGIIGLPN…SLLSEVWKRI (168 aa)) constitute an OBG-type G domain. ATP is bound by residues 166-173 (GLPNAGKS), 191-195 (FTTLI), 213-216 (DIPG), 280-283 (NKIE), and 309-311 (SSS). Mg(2+) contacts are provided by Ser-173 and Thr-193.

Belongs to the TRAFAC class OBG-HflX-like GTPase superfamily. OBG GTPase family. Monomer. The cofactor is Mg(2+).

Its subcellular location is the cytoplasm. Functionally, an essential GTPase which binds GTP, GDP and possibly (p)ppGpp with moderate affinity, with high nucleotide exchange rates and a fairly low GTP hydrolysis rate. Plays a role in control of the cell cycle, stress response, ribosome biogenesis and in those bacteria that undergo differentiation, in morphogenesis control. The polypeptide is GTPase Obg (Prochlorococcus marinus (strain AS9601)).